We begin with the raw amino-acid sequence, 150 residues long: 3-hydroxyacyl-[acyl-carrier-protein] dehydratase FabZ (150 aa).

Residue His54 is part of the active site.

Belongs to the thioester dehydratase family. FabZ subfamily.

It is found in the cytoplasm. The enzyme catalyses a (3R)-hydroxyacyl-[ACP] = a (2E)-enoyl-[ACP] + H2O. Functionally, involved in unsaturated fatty acids biosynthesis. Catalyzes the dehydration of short chain beta-hydroxyacyl-ACPs and long chain saturated and unsaturated beta-hydroxyacyl-ACPs. This is 3-hydroxyacyl-[acyl-carrier-protein] dehydratase FabZ from Vibrio atlanticus (strain LGP32) (Vibrio splendidus (strain Mel32)).